We begin with the raw amino-acid sequence, 723 residues long: DNA-binding protein RFX2 (723 aa).

Positions 1–46 are disordered; sequence MQNSEGGADSPASVALRPSAAAPPVPASPQRVLVQAASSNPKGAQM. Residues 10 to 20 show a composition bias toward low complexity; sequence SPASVALRPSA. At S28 the chain carries Phosphoserine. The RFX-type winged-helix DNA-binding region spans 199–274; the sequence is HLQWLLDNYE…YHYYGIRLKP (76 aa). Residues 292–332 form a disordered region; the sequence is QQPMHQKPRYRPAQKTDSLGDSGSHSGLHSTPEQTMAVQSQ. Residues 308-321 show a composition bias toward low complexity; the sequence is DSLGDSGSHSGLHS. Residues 322–332 show a composition bias toward polar residues; sequence TPEQTMAVQSQ. The residue at position 416 (S416) is a Phosphoserine. The interval 688–723 is disordered; the sequence is MGDEQRGSEAGPDARSLGEPLVKRERSDPNHSLQGI.

This sequence belongs to the RFX family. In terms of assembly, homodimer; probably only forms homodimers in testis. Heterodimer; heterodimerizes with RFX1 and RFX3.

The protein resides in the nucleus. The protein localises to the cytoplasm. Functionally, transcription factor that acts as a key regulator of spermatogenesis. Acts by regulating expression of genes required for the haploid phase during spermiogenesis, such as genes required for cilium assembly and function. Recognizes and binds the X-box, a regulatory motif with DNA sequence 5'-GTNRCC(0-3N)RGYAAC-3' present on promoters. Probably activates transcription of the testis-specific histone gene H1-6. The chain is DNA-binding protein RFX2 (RFX2) from Homo sapiens (Human).